The following is a 239-amino-acid chain: Metallo-beta-lactamase IND-1 (239 aa).

The first 20 residues, 1–20 (MKKSIRFFIVSILLSPFASA), serve as a signal peptide directing secretion. Positions 96, 98, 100, 159, and 178 each coordinate Zn(2+). Lysine 181 contacts a beta-lactam. Histidine 220 provides a ligand contact to Zn(2+).

This sequence belongs to the metallo-beta-lactamase superfamily. Class-B beta-lactamase family. Monomer. It depends on Zn(2+) as a cofactor.

The protein localises to the periplasm. It catalyses the reaction a beta-lactam + H2O = a substituted beta-amino acid. Inhibited by chelating agents such as EDTA. Not susceptible to inactivation by the beta-lactamase-blocking agent clavulanic acid. In terms of biological role, class B beta-lactamase which confers resistance to the beta-lactam antibiotics, including penicillins, cephalosporins and carbapenems. Acts via hydrolysis of the beta-lactam ring. Has penicillin-, cephalosporin- and carbapenem-hydrolyzing activities. The protein is Metallo-beta-lactamase IND-1 of Chryseobacterium indologenes (Flavobacterium indologenes).